The following is a 517-amino-acid chain: Ribose import ATP-binding protein RbsA 2 (517 aa).

ABC transporter domains lie at 10 to 245 and 255 to 498; these read LRIE…GRSI and DAGE…VSTH. 42 to 49 is a binding site for ATP; sequence GENGAGKS. The disordered stretch occupies residues 497–517; sequence THTGNSPHSGGTDGTEASRGH.

Belongs to the ABC transporter superfamily. Ribose importer (TC 3.A.1.2.1) family. The complex is composed of an ATP-binding protein (RbsA), two transmembrane proteins (RbsC) and a solute-binding protein (RbsB).

It is found in the cell membrane. It carries out the reaction D-ribose(out) + ATP + H2O = D-ribose(in) + ADP + phosphate + H(+). Its function is as follows. Part of the ABC transporter complex RbsABC involved in ribose import. Responsible for energy coupling to the transport system. This chain is Ribose import ATP-binding protein RbsA 2, found in Streptomyces coelicolor (strain ATCC BAA-471 / A3(2) / M145).